The primary structure comprises 91 residues: Small ribosomal subunit protein uS19 (91 aa).

Belongs to the universal ribosomal protein uS19 family.

Functionally, protein S19 forms a complex with S13 that binds strongly to the 16S ribosomal RNA. This chain is Small ribosomal subunit protein uS19, found in Cupriavidus pinatubonensis (strain JMP 134 / LMG 1197) (Cupriavidus necator (strain JMP 134)).